A 465-amino-acid chain; its full sequence is Ribulose bisphosphate carboxylase large chain (465 aa).

At K4 the chain carries N6,N6,N6-trimethyllysine. Substrate contacts are provided by N113 and T163. The active-site Proton acceptor is K165. K167 is a substrate binding site. The Mg(2+) site is built by K191, D193, and E194. K191 carries the N6-carboxylysine modification. Catalysis depends on H284, which acts as the Proton acceptor. Substrate is bound by residues R285, H317, and S369.

This sequence belongs to the RuBisCO large chain family. Type I subfamily. In terms of assembly, heterohexadecamer of 8 large chains and 8 small chains; disulfide-linked. The disulfide link is formed within the large subunit homodimers. The cofactor is Mg(2+). In terms of processing, the disulfide bond which can form in the large chain dimeric partners within the hexadecamer appears to be associated with oxidative stress and protein turnover.

It is found in the plastid. The protein localises to the chloroplast. The catalysed reaction is 2 (2R)-3-phosphoglycerate + 2 H(+) = D-ribulose 1,5-bisphosphate + CO2 + H2O. The enzyme catalyses D-ribulose 1,5-bisphosphate + O2 = 2-phosphoglycolate + (2R)-3-phosphoglycerate + 2 H(+). In terms of biological role, ruBisCO catalyzes two reactions: the carboxylation of D-ribulose 1,5-bisphosphate, the primary event in carbon dioxide fixation, as well as the oxidative fragmentation of the pentose substrate in the photorespiration process. Both reactions occur simultaneously and in competition at the same active site. This chain is Ribulose bisphosphate carboxylase large chain, found in Manilkara zapota (Sapodilla plum).